We begin with the raw amino-acid sequence, 136 residues long: Large ribosomal subunit protein uL16 (136 aa).

This sequence belongs to the universal ribosomal protein uL16 family. In terms of assembly, part of the 50S ribosomal subunit.

In terms of biological role, binds 23S rRNA and is also seen to make contacts with the A and possibly P site tRNAs. This Ehrlichia ruminantium (strain Gardel) protein is Large ribosomal subunit protein uL16.